The chain runs to 262 residues: Hydroxyethylthiazole kinase (262 aa).

Substrate is bound at residue Met50. ATP-binding residues include Arg125 and Thr171. Gly198 is a substrate binding site.

This sequence belongs to the Thz kinase family. Mg(2+) serves as cofactor.

It carries out the reaction 5-(2-hydroxyethyl)-4-methylthiazole + ATP = 4-methyl-5-(2-phosphooxyethyl)-thiazole + ADP + H(+). It functions in the pathway cofactor biosynthesis; thiamine diphosphate biosynthesis; 4-methyl-5-(2-phosphoethyl)-thiazole from 5-(2-hydroxyethyl)-4-methylthiazole: step 1/1. In terms of biological role, catalyzes the phosphorylation of the hydroxyl group of 4-methyl-5-beta-hydroxyethylthiazole (THZ). The polypeptide is Hydroxyethylthiazole kinase (Escherichia coli O6:K15:H31 (strain 536 / UPEC)).